Consider the following 59-residue polypeptide: Protein QUA-QUINE STARCH (59 aa).

Expressed in hypocotyls, leaves, vasculature, hydathodes, trichomes, pedicels, sepals, filaments, mature pollen, stigma papillae, styles, siliques, root and shoot tips, but not in shoot meristem, petals or root epidermis.

Its subcellular location is the cytoplasm. In terms of biological role, involved in regulating carbon and nitrogen allocation to starch and protein. The protein is Protein QUA-QUINE STARCH of Arabidopsis thaliana (Mouse-ear cress).